A 126-amino-acid chain; its full sequence is Fluoride-specific ion channel FluC (126 aa).

Helical transmembrane passes span Ser4–Leu24, Gly36–Ala56, Leu68–Val88, and Ala99–Ala119. Residues Gly75 and Thr78 each coordinate Na(+).

Belongs to the fluoride channel Fluc/FEX (TC 1.A.43) family.

Its subcellular location is the cell inner membrane. It carries out the reaction fluoride(in) = fluoride(out). With respect to regulation, na(+) is not transported, but it plays an essential structural role and its presence is essential for fluoride channel function. Its function is as follows. Fluoride-specific ion channel. Important for reducing fluoride concentration in the cell, thus reducing its toxicity. The sequence is that of Fluoride-specific ion channel FluC from Chromobacterium violaceum (strain ATCC 12472 / DSM 30191 / JCM 1249 / CCUG 213 / NBRC 12614 / NCIMB 9131 / NCTC 9757 / MK).